A 164-amino-acid chain; its full sequence is Peptidyl-prolyl cis-trans isomerase A (164 aa).

M1 is modified (N-acetylmethionine). N-acetylvaline; in Peptidyl-prolyl cis-trans isomerase A, N-terminally processed is present on V2. The PPIase cyclophilin-type domain maps to 7 to 163; it reads FFDIAVDGEP…KKITIADCGQ (157 aa). Position 28 is an N6-acetyllysine; alternate (K28). Residue K28 forms a Glycyl lysine isopeptide (Lys-Gly) (interchain with G-Cter in SUMO2); alternate linkage. A Glycyl lysine isopeptide (Lys-Gly) (interchain with G-Cter in ubiquitin); alternate cross-link involves residue K28. An N6-acetyllysine mark is found at K44 and K76. Position 77 is a phosphoserine (S77). K82 is modified (N6-acetyllysine; alternate). A Glycyl lysine isopeptide (Lys-Gly) (interchain with G-Cter in SUMO2); alternate cross-link involves residue K82. Residue T93 is modified to Phosphothreonine. N108 carries an N-linked (GlcNAc...) asparagine glycan. An N6-acetyllysine mark is found at K125, K131, and K133.

This sequence belongs to the cyclophilin-type PPIase family. PPIase A subfamily. Interacts with protein phosphatase PPP3CA/calcineurin A. Interacts with isoform 2 of BSG/CD147. Interacts with FOXO1; the interaction promotes FOXO1 dephosphorylation, nuclear accumulation and transcriptional activity. Interacts with integrin ITGA2B:ITGB3; the interaction is ROS and peptidyl-prolyl cis-trans isomerase (PPIase) activity-dependent and is increased in the presence of thrombin. Interacts with MAP3K5. Interacts with TARDBP; the interaction is dependent on the RNA-binding activity of TARDBP and the PPIase activity of PPIA/CYPA and the acetylation of PPIA/CYPA at Lys-125 favors the interaction. Interacts with HNRNPA1, HNRNPA2B1, HNRNPC, RBMX, HNRNPK and HNRNPM. Acetylation at Lys-125 markedly inhibits catalysis of cis to trans isomerization. PPIA acetylation also antagonizes the immunosuppressive effects of cyclosporine by inhibiting the sequential steps of cyclosporine binding and calcineurin inhibition. Acetylation at Lys-125 favors the interaction with TARDBP.

Its subcellular location is the cytoplasm. It is found in the secreted. The protein localises to the nucleus. The enzyme catalyses [protein]-peptidylproline (omega=180) = [protein]-peptidylproline (omega=0). With respect to regulation, binds cyclosporin A (CsA). CsA mediates some of its effects via an inhibitory action on PPIase. Functionally, catalyzes the cis-trans isomerization of proline imidic peptide bonds in oligopeptides. Exerts a strong chemotactic effect on leukocytes partly through activation of one of its membrane receptors BSG/CD147, initiating a signaling cascade that culminates in MAPK/ERK activation. Activates endothelial cells (ECs) in a proinflammatory manner by stimulating activation of NF-kappa-B and ERK, JNK and p38 MAP-kinases and by inducing expression of adhesion molecules including SELE and VCAM1. Induces apoptosis in ECs by promoting the FOXO1-dependent expression of CCL2 and BCL2L11 which are involved in EC chemotaxis and apoptosis. In response to oxidative stress, initiates proapoptotic and antiapoptotic signaling in ECs via activation of NF-kappa-B and AKT1 and up-regulation of antiapoptotic protein BCL2. Negatively regulates MAP3K5/ASK1 kinase activity, autophosphorylation and oxidative stress-induced apoptosis mediated by MAP3K5/ASK1. Necessary for the assembly of TARDBP in heterogeneous nuclear ribonucleoprotein (hnRNP) complexes and regulates TARDBP binding to RNA UG repeats and TARDBP-dependent expression of HDAC6, ATG7 and VCP which are involved in clearance of protein aggregates. Plays an important role in platelet activation and aggregation. Regulates calcium mobilization and integrin ITGA2B:ITGB3 bidirectional signaling via increased ROS production as well as by facilitating the interaction between integrin and the cell cytoskeleton. Binds heparan sulfate glycosaminoglycans. The polypeptide is Peptidyl-prolyl cis-trans isomerase A (PPIA) (Saguinus oedipus (Cotton-top tamarin)).